Consider the following 196-residue polypeptide: Nucleoside triphosphate pyrophosphatase (196 aa).

Asp72 (proton acceptor) is an active-site residue.

It belongs to the Maf family. A divalent metal cation serves as cofactor.

It is found in the cytoplasm. The enzyme catalyses a ribonucleoside 5'-triphosphate + H2O = a ribonucleoside 5'-phosphate + diphosphate + H(+). It carries out the reaction a 2'-deoxyribonucleoside 5'-triphosphate + H2O = a 2'-deoxyribonucleoside 5'-phosphate + diphosphate + H(+). Its function is as follows. Nucleoside triphosphate pyrophosphatase. May have a dual role in cell division arrest and in preventing the incorporation of modified nucleotides into cellular nucleic acids. In Chlamydia muridarum (strain MoPn / Nigg), this protein is Nucleoside triphosphate pyrophosphatase.